Here is a 355-residue protein sequence, read N- to C-terminus: 3-isopropylmalate dehydrogenase (355 aa).

Substrate-binding residues include Arg-98, Arg-108, Arg-132, and Asp-223. Mg(2+) is bound by residues Asp-223, Asp-247, and Asp-251. 283–295 (GSAPDIAGQQKAD) provides a ligand contact to NAD(+).

The protein belongs to the isocitrate and isopropylmalate dehydrogenases family. LeuB type 2 subfamily. In terms of assembly, homodimer. The cofactor is Mg(2+). Mn(2+) serves as cofactor.

Its subcellular location is the cytoplasm. The enzyme catalyses (2R,3S)-3-isopropylmalate + NAD(+) = 4-methyl-2-oxopentanoate + CO2 + NADH. Its pathway is amino-acid biosynthesis; L-leucine biosynthesis; L-leucine from 3-methyl-2-oxobutanoate: step 3/4. In terms of biological role, catalyzes the oxidation of 3-carboxy-2-hydroxy-4-methylpentanoate (3-isopropylmalate) to 3-carboxy-4-methyl-2-oxopentanoate. The product decarboxylates to 4-methyl-2 oxopentanoate. This chain is 3-isopropylmalate dehydrogenase, found in Clavibacter michiganensis subsp. michiganensis (strain NCPPB 382).